We begin with the raw amino-acid sequence, 457 residues long: Cysteine--tRNA ligase (457 aa).

Cys-28 provides a ligand contact to Zn(2+). Residues 30 to 40 (PTVYDTAHIGN) carry the 'HIGH' region motif. Positions 212, 237, and 241 each coordinate Zn(2+). Residues 270–274 (KMSKS) carry the 'KMSKS' region motif. ATP is bound at residue Lys-273.

Belongs to the class-I aminoacyl-tRNA synthetase family. In terms of assembly, monomer. Zn(2+) is required as a cofactor.

It is found in the cytoplasm. It catalyses the reaction tRNA(Cys) + L-cysteine + ATP = L-cysteinyl-tRNA(Cys) + AMP + diphosphate. The protein is Cysteine--tRNA ligase of Wolbachia sp. subsp. Drosophila simulans (strain wRi).